Here is a 222-residue protein sequence, read N- to C-terminus: MRAAVVVFPGSNCDRDLAVAFEQAGFDVSMVWHKDADLPQGIDIVGIPGGFSYGDYLRCGAIAAQSPICKAVVAHTARGGYALGVCNGFQVLTETGILPGALLRNAGLKYICKTVGLKVETSNSVFTEGYNAGDVIGIPIAHHDGNYYADDETLAALKAEDRIAFTYTDNPNGARDDIAGILSANRRVLGMMPHPERAADAGHGGTDGVALFRALAGALTPA.

One can recognise a Glutamine amidotransferase type-1 domain in the interval Ala-3 to Ala-222. Catalysis depends on Cys-86, which acts as the Nucleophile. Active-site residues include His-194 and Glu-196.

In terms of assembly, part of the FGAM synthase complex composed of 1 PurL, 1 PurQ and 2 PurS subunits.

The protein resides in the cytoplasm. It carries out the reaction N(2)-formyl-N(1)-(5-phospho-beta-D-ribosyl)glycinamide + L-glutamine + ATP + H2O = 2-formamido-N(1)-(5-O-phospho-beta-D-ribosyl)acetamidine + L-glutamate + ADP + phosphate + H(+). The catalysed reaction is L-glutamine + H2O = L-glutamate + NH4(+). It participates in purine metabolism; IMP biosynthesis via de novo pathway; 5-amino-1-(5-phospho-D-ribosyl)imidazole from N(2)-formyl-N(1)-(5-phospho-D-ribosyl)glycinamide: step 1/2. In terms of biological role, part of the phosphoribosylformylglycinamidine synthase complex involved in the purines biosynthetic pathway. Catalyzes the ATP-dependent conversion of formylglycinamide ribonucleotide (FGAR) and glutamine to yield formylglycinamidine ribonucleotide (FGAM) and glutamate. The FGAM synthase complex is composed of three subunits. PurQ produces an ammonia molecule by converting glutamine to glutamate. PurL transfers the ammonia molecule to FGAR to form FGAM in an ATP-dependent manner. PurS interacts with PurQ and PurL and is thought to assist in the transfer of the ammonia molecule from PurQ to PurL. The chain is Phosphoribosylformylglycinamidine synthase subunit PurQ from Ruegeria pomeroyi (strain ATCC 700808 / DSM 15171 / DSS-3) (Silicibacter pomeroyi).